A 427-amino-acid chain; its full sequence is CCA-adding enzyme (427 aa).

The ATP site is built by Ser50 and Lys53. Positions 50 and 53 each coordinate CTP. 3 residues coordinate Mg(2+): Asp61, Asp63, and Asp112. The ATP site is built by His135, Lys155, and Tyr164. Residues His135, Lys155, and Tyr164 each contribute to the CTP site.

The protein belongs to the tRNA nucleotidyltransferase/poly(A) polymerase family. Archaeal CCA-adding enzyme subfamily. As to quaternary structure, homodimer. Mg(2+) is required as a cofactor.

It carries out the reaction a tRNA precursor + 2 CTP + ATP = a tRNA with a 3' CCA end + 3 diphosphate. It catalyses the reaction a tRNA with a 3' CCA end + 2 CTP + ATP = a tRNA with a 3' CCACCA end + 3 diphosphate. In terms of biological role, catalyzes the addition and repair of the essential 3'-terminal CCA sequence in tRNAs without using a nucleic acid template. Adds these three nucleotides in the order of C, C, and A to the tRNA nucleotide-73, using CTP and ATP as substrates and producing inorganic pyrophosphate. tRNA 3'-terminal CCA addition is required both for tRNA processing and repair. Also involved in tRNA surveillance by mediating tandem CCA addition to generate a CCACCA at the 3' terminus of unstable tRNAs. While stable tRNAs receive only 3'-terminal CCA, unstable tRNAs are marked with CCACCA and rapidly degraded. In Picrophilus torridus (strain ATCC 700027 / DSM 9790 / JCM 10055 / NBRC 100828 / KAW 2/3), this protein is CCA-adding enzyme.